A 35-amino-acid polypeptide reads, in one-letter code: Photosystem II reaction center protein M (35 aa).

The helical transmembrane segment at 5-25 threads the bilayer; it reads ILAFIATALFILVPTAFLLII.

It belongs to the PsbM family. As to quaternary structure, PSII is composed of 1 copy each of membrane proteins PsbA, PsbB, PsbC, PsbD, PsbE, PsbF, PsbH, PsbI, PsbJ, PsbK, PsbL, PsbM, PsbT, PsbX, PsbY, PsbZ, Psb30/Ycf12, at least 3 peripheral proteins of the oxygen-evolving complex and a large number of cofactors. It forms dimeric complexes.

The protein localises to the plastid. Its subcellular location is the chloroplast thylakoid membrane. Functionally, one of the components of the core complex of photosystem II (PSII). PSII is a light-driven water:plastoquinone oxidoreductase that uses light energy to abstract electrons from H(2)O, generating O(2) and a proton gradient subsequently used for ATP formation. It consists of a core antenna complex that captures photons, and an electron transfer chain that converts photonic excitation into a charge separation. This subunit is found at the monomer-monomer interface. The polypeptide is Photosystem II reaction center protein M (Amborella trichopoda).